A 96-amino-acid polypeptide reads, in one-letter code: Co-chaperonin GroES (96 aa).

Belongs to the GroES chaperonin family. As to quaternary structure, heptamer of 7 subunits arranged in a ring. Interacts with the chaperonin GroEL.

The protein resides in the cytoplasm. Together with the chaperonin GroEL, plays an essential role in assisting protein folding. The GroEL-GroES system forms a nano-cage that allows encapsulation of the non-native substrate proteins and provides a physical environment optimized to promote and accelerate protein folding. GroES binds to the apical surface of the GroEL ring, thereby capping the opening of the GroEL channel. This Actinobacillus succinogenes (strain ATCC 55618 / DSM 22257 / CCUG 43843 / 130Z) protein is Co-chaperonin GroES.